The chain runs to 744 residues: Vesicle-fusing ATPase (744 aa).

The residue at position 105 (Lys105) is an N6-acetyllysine. At Ser207 the chain carries Phosphoserine. Tyr259 is subject to Phosphotyrosine. Residues 505–510 (NGIIKW) and 545–552 (PHSGKTAL) each bind ATP. Thr550 contacts Mg(2+). Ser569 is modified (phosphoserine; by CDK16).

It belongs to the AAA ATPase family. In terms of assembly, homohexamer. Interacts with GABARAP and GABARAPL2. Interacts with GRIA2. Interacts with PLK2, leading to disrupt the interaction with GRIA2. Interacts with MUSK; may regulate MUSK endocytosis and activity. Interacts with CDK16. It depends on Mg(2+) as a cofactor. Post-translationally, phosphorylation at Ser-569 interferes with homohexamerization.

Its subcellular location is the cytoplasm. The enzyme catalyses ATP + H2O = ADP + phosphate + H(+). In terms of biological role, required for vesicle-mediated transport. Catalyzes the fusion of transport vesicles within the Golgi cisternae. Is also required for transport from the endoplasmic reticulum to the Golgi stack. Seems to function as a fusion protein required for the delivery of cargo proteins to all compartments of the Golgi stack GRIA2 leads to influence GRIA2 membrane cycling. In Mus musculus (Mouse), this protein is Vesicle-fusing ATPase (Nsf).